The sequence spans 339 residues: Anthranilate phosphoribosyltransferase (339 aa).

5-phospho-alpha-D-ribose 1-diphosphate-binding positions include Gly-82, 85–86 (GD), Thr-90, 92–95 (NIST), and 110–118 (KHGNRAVSS). Gly-82 contacts anthranilate. Residue Ser-94 coordinates Mg(2+). Anthranilate is bound by residues Asn-113 and Arg-168. Mg(2+) is bound by residues Asp-227 and Glu-228.

This sequence belongs to the anthranilate phosphoribosyltransferase family. In terms of assembly, homodimer. It depends on Mg(2+) as a cofactor.

The enzyme catalyses N-(5-phospho-beta-D-ribosyl)anthranilate + diphosphate = 5-phospho-alpha-D-ribose 1-diphosphate + anthranilate. Its pathway is amino-acid biosynthesis; L-tryptophan biosynthesis; L-tryptophan from chorismate: step 2/5. In terms of biological role, catalyzes the transfer of the phosphoribosyl group of 5-phosphorylribose-1-pyrophosphate (PRPP) to anthranilate to yield N-(5'-phosphoribosyl)-anthranilate (PRA). The polypeptide is Anthranilate phosphoribosyltransferase (Clostridium beijerinckii (strain ATCC 51743 / NCIMB 8052) (Clostridium acetobutylicum)).